Reading from the N-terminus, the 363-residue chain is Protein MAK32 (363 aa).

It to S.pombe SpAC4G8.14c.

Functionally, necessary for the structural stability of L-A double-stranded RNA-containing particles. Necessary for growth at 37 degrees Celsius as well as for maintenance of the killer plasmid. The chain is Protein MAK32 (MAK32) from Saccharomyces cerevisiae (strain ATCC 204508 / S288c) (Baker's yeast).